We begin with the raw amino-acid sequence, 163 residues long: Phosphopantetheine adenylyltransferase (163 aa).

S8 serves as a coordination point for substrate. ATP contacts are provided by residues 8–9 and H16; that span reads SF. Substrate-binding residues include K40, T72, and R86. Residues 87–89, E97, and 122–128 each bind ATP; these read GLR and HSFLSSS.

The protein belongs to the bacterial CoaD family. Homohexamer. Requires Mg(2+) as cofactor.

It localises to the cytoplasm. The catalysed reaction is (R)-4'-phosphopantetheine + ATP + H(+) = 3'-dephospho-CoA + diphosphate. It functions in the pathway cofactor biosynthesis; coenzyme A biosynthesis; CoA from (R)-pantothenate: step 4/5. Functionally, reversibly transfers an adenylyl group from ATP to 4'-phosphopantetheine, yielding dephospho-CoA (dPCoA) and pyrophosphate. This Synechococcus sp. (strain CC9902) protein is Phosphopantetheine adenylyltransferase.